Consider the following 238-residue polypeptide: Ribonuclease PH (238 aa).

Phosphate contacts are provided by residues R86 and 124–126 (GTR).

This sequence belongs to the RNase PH family. As to quaternary structure, homohexameric ring arranged as a trimer of dimers.

It catalyses the reaction tRNA(n+1) + phosphate = tRNA(n) + a ribonucleoside 5'-diphosphate. Its function is as follows. Phosphorolytic 3'-5' exoribonuclease that plays an important role in tRNA 3'-end maturation. Removes nucleotide residues following the 3'-CCA terminus of tRNAs; can also add nucleotides to the ends of RNA molecules by using nucleoside diphosphates as substrates, but this may not be physiologically important. Probably plays a role in initiation of 16S rRNA degradation (leading to ribosome degradation) during starvation. This chain is Ribonuclease PH, found in Citrobacter koseri (strain ATCC BAA-895 / CDC 4225-83 / SGSC4696).